The chain runs to 964 residues: Probable LRR receptor-like serine/threonine-protein kinase IRK (964 aa).

The signal sequence occupies residues 1–20; it reads MYKALIFTVLLVSAVAPVRS. The Extracellular segment spans residues 21–603; it reads LDPPLNDDVL…GHKRILLSIS (583 aa). LRR repeat units lie at residues 92–116, 117–141, 143–166, 168–190, 191–214, 215–238, 240–261, 263–286, 287–310, 312–334, and 335–358; these read LQFL…MLLS, LVNL…FFRQ, GSLR…ISSC, SLAA…IWSL, NTLR…IDRL, NNLR…IGSC, LLKT…TFQQ, SLCY…IGEM, RSLE…IGNL, ALKV…TANC, and INLL…LFQD. Asparagine 104 is a glycosylation site (N-linked (GlcNAc...) asparagine). Asparagine 173 is a glycosylation site (N-linked (GlcNAc...) asparagine). Asparagine 317 carries N-linked (GlcNAc...) asparagine glycosylation. Asparagine 370 carries an N-linked (GlcNAc...) asparagine glycan. LRR repeat units lie at residues 375–399, 400–423, 425–447, 448–471, 472–495, 496–519, and 521–544; these read IKKI…LGDL, RDLE…IGEL, HLSV…TGGA, VSLE…IKNC, SSLR…LAKL, TRLE…LANL, and YLHT…IFNG. Residue asparagine 470 is glycosylated (N-linked (GlcNAc...) asparagine). N-linked (GlcNAc...) asparagine glycans are attached at residues asparagine 526, asparagine 562, and asparagine 578. The chain crosses the membrane as a helical span at residues 604 to 624; it reads SLIAISAAAAIVVGVIAITVL. The Cytoplasmic segment spans residues 625–964; sequence NLRVRASTVS…SGSSDELGSS (340 aa). Residues 678–951 form the Protein kinase domain; that stretch reads LNKDCELGRG…GEAVNILRMI (274 aa). Residues 684 to 692 and lysine 706 contribute to the ATP site; that span reads LGRGGFGAV.

This sequence belongs to the protein kinase superfamily. Ser/Thr protein kinase family. As to quaternary structure, interacts with IRKI. Post-translationally, autophosphorylated. In terms of tissue distribution, highly expressed in root tips, shoot apices and developing flowers.

The protein localises to the cell membrane. The enzyme catalyses L-seryl-[protein] + ATP = O-phospho-L-seryl-[protein] + ADP + H(+). It carries out the reaction L-threonyl-[protein] + ATP = O-phospho-L-threonyl-[protein] + ADP + H(+). The chain is Probable LRR receptor-like serine/threonine-protein kinase IRK from Arabidopsis thaliana (Mouse-ear cress).